Reading from the N-terminus, the 260-residue chain is Lysozyme D (260 aa).

A signal peptide spans 1–19; sequence MRLLVTLILLIFVLTVSGQ. The disordered stretch occupies residues 83–148; sequence GSTTTGGTGS…SGGSSGSGSG (66 aa). Composition is skewed to gly residues over residues 101 to 119 and 129 to 147; these read SGSG…GSGT and SGSG…GSGS.

The protein belongs to the dictyostelium lysozyme family. In terms of processing, contains disulfide bonds.

The protein localises to the cytoplasmic vesicle lumen. It carries out the reaction Hydrolysis of (1-&gt;4)-beta-linkages between N-acetylmuramic acid and N-acetyl-D-glucosamine residues in a peptidoglycan and between N-acetyl-D-glucosamine residues in chitodextrins.. Its function is as follows. Has antibacterial activity. This chain is Lysozyme D (alyD-1), found in Dictyostelium discoideum (Social amoeba).